The following is a 596-amino-acid chain: Protein kinase C iota type (596 aa).

Residues 1–12 (MPTQRDSSTMSH) are compositionally biased toward polar residues. The interval 1–23 (MPTQRDSSTMSHTVAGGGSGDHS) is disordered. Pro2 carries the post-translational modification N-acetylproline. The segment at 2-28 (PTQRDSSTMSHTVAGGGSGDHSHQVRV) is required for interaction with RAB2. Residues 2–253 (PTQRDSSTMS…KASSSLGLQD (252 aa)) form a regulatory domain region. At Thr3 the chain carries Phosphothreonine. Phosphoserine occurs at positions 7 and 8. Residue Thr9 is modified to Phosphothreonine. The region spanning 25-108 (QVRVKAYYRG…SELLIHVFPC (84 aa)) is the PB1 domain. Residues 72–91 (DEEGDPCTVSSQLELEEAFR) are interaction with PARD6A. The Pseudosubstrate motif lies at 125 to 134 (YRRGARRWRK). A Phorbol-ester/DAG-type zinc finger spans residues 140-190 (GHTFQAKRFNRRAHCAICTDRIWGLGRQGYKCINCKLLVHKKCHKLVTIEC). The interval 221–246 (PSSHESLDQVGEEKEAMNTRESGKAS) is disordered. The span at 225–243 (ESLDQVGEEKEAMNTRESG) shows a compositional bias: basic and acidic residues. The 269-residue stretch at 254–522 (FDLLRVIGRG…FADIQGHPFF (269 aa)) folds into the Protein kinase domain. 260–268 (IGRGSYAKV) contacts ATP. Phosphotyrosine; by SRC occurs at positions 265 and 280. Lys283 provides a ligand contact to ATP. Tyr334 carries the phosphotyrosine; by SRC modification. Asp378 (proton acceptor) is an active-site residue. The residue at position 412 (Thr412) is a Phosphothreonine; by PDPK1. Residues 523–594 (RNVDWDMMEQ…INPLLMSAEE (72 aa)) form the AGC-kinase C-terminal domain. At Thr564 the chain carries Phosphothreonine.

The protein belongs to the protein kinase superfamily. AGC Ser/Thr protein kinase family. PKC subfamily. Forms a complex with SQSTM1 and MP2K5. Interacts directly with SQSTM1. Interacts with IKBKB. Interacts with PARD6A, PARD6B and PARD6G. Part of a quaternary complex containing aPKC, PARD3, a PARD6 protein (PARD6A, PARD6B or PARD6G) and a GTPase protein (CDC42 or RAC1). Part of a complex with LLGL1 and PARD6B. Interacts with ADAP1/CENTA1. Interaction with SMG1, through the ZN-finger domain, activates the kinase activity. Interacts with CDK7. Forms a complex with RAB2A and GAPDH involved in recruitment onto the membrane of vesicular tubular clusters (VTCs). Interacts with ECT2 ('Thr-359' phosphorylated form). Interacts with VAMP2. Interacts with WDFY2 (via WD repeats 1-3). In terms of processing, phosphorylation at Thr-412 in the activation loop is not mandatory for activation. Upon neuronal growth factor (NGF) stimulation, phosphorylated by SRC at Tyr-265, Tyr-280 and Tyr-334. Phosphorylation at Tyr-265 facilitates binding to KPNB1/importin-beta regulating entry of PRKCI into the nucleus. Phosphorylation on Tyr-334 is important for NF-kappa-B stimulation. Phosphorylated at Thr-564 during the initial phase of long term potentiation.

The protein resides in the cytoplasm. It localises to the membrane. The protein localises to the endosome. Its subcellular location is the nucleus. The catalysed reaction is L-seryl-[protein] + ATP = O-phospho-L-seryl-[protein] + ADP + H(+). The enzyme catalyses L-threonyl-[protein] + ATP = O-phospho-L-threonyl-[protein] + ADP + H(+). Its activity is regulated as follows. Atypical PKCs (PRKCI and PRKCZ) exhibit an elevated basal enzymatic activity (that may be due to the interaction with SMG1 or SQSTM1) and are not regulated by diacylglycerol, phosphatidylserine, phorbol esters or calcium ions. Two specific sites, Thr-412 (activation loop of the kinase domain) and Thr-564 (turn motif), need to be phosphorylated for its full activation. Might also be a target for novel lipid activators that are elevated during nutrient-stimulated insulin secretion. Functionally, calcium- and diacylglycerol-independent serine/ threonine-protein kinase that plays a general protective role against apoptotic stimuli, is involved in NF-kappa-B activation, cell survival, differentiation and polarity, and contributes to the regulation of microtubule dynamics in the early secretory pathway. Is necessary for BCR-ABL oncogene-mediated resistance to apoptotic drug in leukemia cells, protecting leukemia cells against drug-induced apoptosis. In cultured neurons, prevents amyloid beta protein-induced apoptosis by interrupting cell death process at a very early step. In glioblastoma cells, may function downstream of phosphatidylinositol 3-kinase (PI(3)K) and PDPK1 in the promotion of cell survival by phosphorylating and inhibiting the pro-apoptotic factor BAD. Can form a protein complex in non-small cell lung cancer (NSCLC) cells with PARD6A and ECT2 and regulate ECT2 oncogenic activity by phosphorylation, which in turn promotes transformed growth and invasion. In response to nerve growth factor (NGF), acts downstream of SRC to phosphorylate and activate IRAK1, allowing the subsequent activation of NF-kappa-B and neuronal cell survival. Functions in the organization of the apical domain in epithelial cells by phosphorylating EZR. This step is crucial for activation and normal distribution of EZR at the early stages of intestinal epithelial cell differentiation. Forms a protein complex with LLGL1 and PARD6B independently of PARD3 to regulate epithelial cell polarity. Plays a role in microtubule dynamics in the early secretory pathway through interaction with RAB2A and GAPDH and recruitment to vesicular tubular clusters (VTCs). In human coronary artery endothelial cells (HCAEC), is activated by saturated fatty acids and mediates lipid-induced apoptosis. Involved in early synaptic long term potentiation phase in CA1 hippocampal cells and short term memory formation. This Pongo abelii (Sumatran orangutan) protein is Protein kinase C iota type (PRKCI).